A 671-amino-acid chain; its full sequence is DNA ligase (671 aa).

NAD(+) contacts are provided by residues 32 to 36 (DAEYD), 81 to 82 (SL), and glutamate 113. Catalysis depends on lysine 115, which acts as the N6-AMP-lysine intermediate. Residues arginine 136, glutamate 173, lysine 290, and lysine 314 each coordinate NAD(+). Cysteine 408, cysteine 411, cysteine 426, and cysteine 432 together coordinate Zn(2+). In terms of domain architecture, BRCT spans 593-671 (EIDSPFAGKT…EAEMIRLLGA (79 aa)).

It belongs to the NAD-dependent DNA ligase family. LigA subfamily. Mg(2+) is required as a cofactor. Mn(2+) serves as cofactor.

The enzyme catalyses NAD(+) + (deoxyribonucleotide)n-3'-hydroxyl + 5'-phospho-(deoxyribonucleotide)m = (deoxyribonucleotide)n+m + AMP + beta-nicotinamide D-nucleotide.. Its function is as follows. DNA ligase that catalyzes the formation of phosphodiester linkages between 5'-phosphoryl and 3'-hydroxyl groups in double-stranded DNA using NAD as a coenzyme and as the energy source for the reaction. It is essential for DNA replication and repair of damaged DNA. This chain is DNA ligase, found in Salmonella heidelberg (strain SL476).